Consider the following 206-residue polypeptide: Ribosomal RNA large subunit methyltransferase E (206 aa).

S-adenosyl-L-methionine-binding residues include Gly60, Trp62, Asp80, Asp96, and Asp121. Lys161 functions as the Proton acceptor in the catalytic mechanism.

This sequence belongs to the class I-like SAM-binding methyltransferase superfamily. RNA methyltransferase RlmE family.

The protein localises to the cytoplasm. It catalyses the reaction uridine(2552) in 23S rRNA + S-adenosyl-L-methionine = 2'-O-methyluridine(2552) in 23S rRNA + S-adenosyl-L-homocysteine + H(+). Functionally, specifically methylates the uridine in position 2552 of 23S rRNA at the 2'-O position of the ribose in the fully assembled 50S ribosomal subunit. The protein is Ribosomal RNA large subunit methyltransferase E of Francisella tularensis subsp. novicida (strain U112).